Consider the following 290-residue polypeptide: Undecaprenyl-diphosphatase (290 aa).

The next 8 helical transmembrane spans lie at 1–21, 48–68, 101–121, 125–145, 161–181, 202–222, 231–251, and 266–286; these read MFLLELIKGIILGIVEGLTEF, SAFTFKVVIQLGSVFAAAWVF, IHVLVGMVPAGILGFLFDDLI, LFSVPTVLIGLFIGAIYMIIA, INYFQAFVIGISQAIAMWPGF, SDFTFIMSVPIMLAASGLSLL, AHIPFYILGFLAAFIVGLIAI, and FAIYRIVLVIFIAILYFGFGI.

It belongs to the UppP family.

The protein resides in the cell membrane. The enzyme catalyses di-trans,octa-cis-undecaprenyl diphosphate + H2O = di-trans,octa-cis-undecaprenyl phosphate + phosphate + H(+). Functionally, catalyzes the dephosphorylation of undecaprenyl diphosphate (UPP). Confers resistance to bacitracin. This chain is Undecaprenyl-diphosphatase, found in Staphylococcus epidermidis (strain ATCC 35984 / DSM 28319 / BCRC 17069 / CCUG 31568 / BM 3577 / RP62A).